Reading from the N-terminus, the 259-residue chain is 3-deoxy-manno-octulosonate cytidylyltransferase 1 (259 aa).

This sequence belongs to the KdsB family.

It localises to the cytoplasm. The enzyme catalyses 3-deoxy-alpha-D-manno-oct-2-ulosonate + CTP = CMP-3-deoxy-beta-D-manno-octulosonate + diphosphate. The protein operates within nucleotide-sugar biosynthesis; CMP-3-deoxy-D-manno-octulosonate biosynthesis; CMP-3-deoxy-D-manno-octulosonate from 3-deoxy-D-manno-octulosonate and CTP: step 1/1. It functions in the pathway bacterial outer membrane biogenesis; lipopolysaccharide biosynthesis. Its function is as follows. Activates KDO (a required 8-carbon sugar) for incorporation into bacterial lipopolysaccharide in Gram-negative bacteria. The protein is 3-deoxy-manno-octulosonate cytidylyltransferase 1 of Hydrogenovibrio crunogenus (strain DSM 25203 / XCL-2) (Thiomicrospira crunogena).